A 173-amino-acid chain; its full sequence is Glutamyl-tRNA(Gln) amidotransferase subunit C, mitochondrial (173 aa).

It belongs to the GatC family. Subunit of the heterotrimeric GatCAB amidotransferase (AdT) complex, composed of A, B and C subunits.

It is found in the mitochondrion. The enzyme catalyses L-glutamyl-tRNA(Gln) + L-glutamine + ATP + H2O = L-glutaminyl-tRNA(Gln) + L-glutamate + ADP + phosphate + H(+). Its function is as follows. Allows the formation of correctly charged Gln-tRNA(Gln) through the transamidation of misacylated Glu-tRNA(Gln) in the mitochondria. The reaction takes place in the presence of glutamine and ATP through an activated gamma-phospho-Glu-tRNA(Gln). The chain is Glutamyl-tRNA(Gln) amidotransferase subunit C, mitochondrial from Drosophila persimilis (Fruit fly).